The primary structure comprises 120 residues: Insoluble matrix shell protein 2 (120 aa).

The signal sequence occupies residues 1-20 (MHQSSLGVLVLFSLIYLCIS).

As to expression, component of the acid-insoluble organic matrix of the calcified shell.

The protein resides in the secreted. The chain is Insoluble matrix shell protein 2 from Ruditapes philippinarum (Japanese carpet shell).